We begin with the raw amino-acid sequence, 444 residues long: Probable glycine dehydrogenase (decarboxylating) subunit 1 (444 aa).

Belongs to the GcvP family. N-terminal subunit subfamily. As to quaternary structure, the glycine cleavage system is composed of four proteins: P, T, L and H. In this organism, the P 'protein' is a heterodimer of two subunits.

The catalysed reaction is N(6)-[(R)-lipoyl]-L-lysyl-[glycine-cleavage complex H protein] + glycine + H(+) = N(6)-[(R)-S(8)-aminomethyldihydrolipoyl]-L-lysyl-[glycine-cleavage complex H protein] + CO2. Its function is as follows. The glycine cleavage system catalyzes the degradation of glycine. The P protein binds the alpha-amino group of glycine through its pyridoxal phosphate cofactor; CO(2) is released and the remaining methylamine moiety is then transferred to the lipoamide cofactor of the H protein. The protein is Probable glycine dehydrogenase (decarboxylating) subunit 1 of Chlorobium phaeobacteroides (strain DSM 266 / SMG 266 / 2430).